The primary structure comprises 360 residues: Decorin (360 aa).

The first 16 residues, 1–16, serve as a signal peptide directing secretion; the sequence is MKATIIFLLLAQVSWA. Positions 17–30 are excised as a propeptide; it reads GPFQQRGLFDFMLE. A glycan (O-linked (Xyl...) (glycosaminoglycan) serine) is linked at S34. Cystine bridges form between C55–C61 and C59–C68. LRR repeat units follow at residues 74-94, 95-118, 119-142, 143-163, 164-187, 188-213, 214-234, 235-258, 259-282, 283-305, 306-335, and 336-360; these read DKVPKDLPPDTTLLDLQNNKI, TEIKDGDFKNLKNLHALILVNNKI, SKISPGAFTPLVKLERLYLSKNHL, KELPEKMPKTLQELRVHENEI, TKVRKAVFNGLNQMIVVELGTNPL, KSSGIENGAFQGMKKLSYIRIADTNI, TTIPPGLPPSLTELHLDGNKI, TKVDAASLRGLNNLAKLGLSFNSI, SAVDNGSLANTPHLRELHLDNNKL, IKVPGGLADHKYIQVVYLHNNNI, SAVGSNDFCPPGYNTKKASYSGVSLFSNPV, and QYWEIQPSTFRCVYVRSAIQLGNYK. N-linked (GlcNAc...) asparagine glycosylation occurs at N212. 2 N-linked (GlcNAc...) asparagine glycosylation sites follow: N263 and N304. C314 and C347 form a disulfide bridge.

This sequence belongs to the small leucine-rich proteoglycan (SLRP) family. SLRP class I subfamily. As to quaternary structure, binds to type I and type II collagen, fibronectin and TGF-beta. Forms a ternary complex with MFAP2 and ELN. Interacts with DPT. In terms of processing, the attached glycosaminoglycan chain can be either chondroitin sulfate or dermatan sulfate depending upon the tissue of origin.

It is found in the secreted. The protein localises to the extracellular space. The protein resides in the extracellular matrix. May affect the rate of fibrils formation. The protein is Decorin (DCN) of Equus caballus (Horse).